The following is a 143-amino-acid chain: MFMGEYHHNLDNKGRLIIPAKLRDQIENKMVFTRGMEGCIFGYSMEEWQKIEAKLAKLPLTKRNTRKFMRLFYSGAMESEFDKQGRVNFTSTLKAHAGLIKECVIIGVSDRIEIWAKERWDSFEEEANEDYDDIAENLDDIEL.

SpoVT-AbrB domains are found at residues 5 to 47 and 76 to 119; these read EYHH…SMEE and AMES…AKER.

The protein belongs to the MraZ family. Forms oligomers.

It is found in the cytoplasm. Its subcellular location is the nucleoid. In Lactobacillus helveticus (strain DPC 4571), this protein is Transcriptional regulator MraZ.